The chain runs to 624 residues: MSIDIEKYPTLALVETPEDLRLLPKESLPKLCDELRLYLLNSVSRSSGHFASGLGAIELTVALHYVYKTPFDNLIWDVGHQAYPHKILTGRRDRIDTIRQKNGLHPFPWRDESEYDKLCVGHSSTSISAGLGMAVAAEQENLGRKTVCVIGDGAITAGMAFEAMNHAGDINPDMLVVLNDNEMSISENVGALNNHLAQLLSGKLYTTLREGGKKVFSGIPPIKELLKKTEEHIKGMVVPGTMFEELGFNYIGPVDGHDVIALVQTLTNMRDLKGPQLLHIMTKKGRGYAPAEQDPISWHAVPKFDPKTGTLPKSPNARPTFSKIFGDWLCEEAATDEKLMAITPAMREGSGMVRFSKEYPAQYFDVAIAEQHAVTFAAGLAIGGYKPIVAIYSTFLQRAYDQVIHDVAIQKLPVLFAIDRGGIVGADGQTHQGAFDLSFLRCIPNMIIMAPSDENECRQMLHTGYHYQEGPVAVRYPRGSGVGAPLQPLSELPIGKGIIRRQGKSIAILNFGTLLPEALDVAEKLDATVADMRFIKPLDKELILSLAKQHDILVTLEENAIMGGAGSGVNELLMQERCLVPVLNLGLPDLFVPQGGQEEIRADLGLDATGIEKSIKAYQAHSLR.

Residues His-80 and 121–123 (GHS) each bind thiamine diphosphate. Asp-152 is a binding site for Mg(2+). Thiamine diphosphate is bound by residues 153-154 (GA), Asn-181, Tyr-288, and Glu-370. Asn-181 is a Mg(2+) binding site.

It belongs to the transketolase family. DXPS subfamily. As to quaternary structure, homodimer. Mg(2+) is required as a cofactor. It depends on thiamine diphosphate as a cofactor.

The enzyme catalyses D-glyceraldehyde 3-phosphate + pyruvate + H(+) = 1-deoxy-D-xylulose 5-phosphate + CO2. It functions in the pathway metabolic intermediate biosynthesis; 1-deoxy-D-xylulose 5-phosphate biosynthesis; 1-deoxy-D-xylulose 5-phosphate from D-glyceraldehyde 3-phosphate and pyruvate: step 1/1. In terms of biological role, catalyzes the acyloin condensation reaction between C atoms 2 and 3 of pyruvate and glyceraldehyde 3-phosphate to yield 1-deoxy-D-xylulose-5-phosphate (DXP). This is 1-deoxy-D-xylulose-5-phosphate synthase from Proteus mirabilis (strain HI4320).